The chain runs to 501 residues: Beta-secretase 1 (501 aa).

The first 21 residues, 1 to 21, serve as a signal peptide directing secretion; it reads MAQALPWLLLWMGAGVLPAHG. The propeptide occupies 22–45; sequence TQHGIRLPLRSGLGGAPLGLRLPR. Residues 22–457 lie on the Extracellular side of the membrane; that stretch reads TQHGIRLPLR…PQTDESTLMT (436 aa). Residues 39–58 form a disordered region; that stretch reads LGLRLPRETDEEPEEPGRRG. One can recognise a Peptidase A1 domain in the interval 75–416; that stretch reads YYVEMTVGSP…DRARKRIGFA (342 aa). The active site involves aspartate 93. Lysine 126 carries the post-translational modification N6-acetyllysine. 3 N-linked (GlcNAc...) asparagine glycosylation sites follow: asparagine 153, asparagine 172, and asparagine 223. 3 disulfide bridges follow: cysteine 216-cysteine 420, cysteine 278-cysteine 443, and cysteine 330-cysteine 380. An N6-acetyllysine mark is found at lysine 275, lysine 279, and lysine 285. The active site involves aspartate 289. An N6-acetyllysine mark is found at lysine 299, lysine 300, and lysine 307. A glycan (N-linked (GlcNAc...) asparagine) is linked at asparagine 354. A helical transmembrane segment spans residues 458–478; sequence IAYVMAAICALFMLPLCLMVC. 4 S-palmitoyl cysteine lipidation sites follow: cysteine 474, cysteine 478, cysteine 482, and cysteine 485. The Cytoplasmic portion of the chain corresponds to 479-501; sequence QWRCLRCLRQQHDDFADDISLLK. Residues 479 to 501 are interaction with RTN3; the sequence is QWRCLRCLRQQHDDFADDISLLK. The DXXLL motif lies at 496–500; the sequence is DISLL. Serine 498 carries the post-translational modification Phosphoserine. Lysine 501 is covalently cross-linked (Glycyl lysine isopeptide (Lys-Gly) (interchain with G-Cter in ubiquitin)).

It belongs to the peptidase A1 family. In terms of assembly, monomer. Interacts (via DXXLL motif) with GGA1, GGA2 and GGA3 (via their VHS domain); the interaction highly increases when BACE1 is phosphorylated at Ser-498. Interacts with RTN1; RTN2; RTN3 and RTN4; the interaction leads to inhibition of amyloid precursor protein processing. Interacts with SNX6. Interacts with PCSK9. Interacts with NAT8 and NAT8B. Interacts with BIN1. Interacts (via extracellular domain) with ADAM10 (via extracellular domain). Interacts with SORL1; this interaction may affect binding with APP and hence reduce APP cleavage. Interacts with NRDC AND NRG1. Post-translationally, N-Glycosylated. Addition of a bisecting N-acetylglucosamine by MGAT3 blocks lysosomal targeting, further degradation and is required for maintaining stability under stress conditions. Acetylated in the endoplasmic reticulum at Lys-126, Lys-275, Lys-279, Lys-285, Lys-299, Lys-300 and Lys-307. Acetylation by NAT8 and NAT8B is transient and deacetylation probably occurs in the Golgi. Acetylation regulates the maturation, the transport to the plasma membrane, the stability and the expression of the protein. In terms of processing, palmitoylation mediates lipid raft localization. Post-translationally, ubiquitinated at Lys-501, ubiquitination leads to lysosomal degradation. Monoubiquitinated and 'Lys-63'-linked polyubitinated. Deubiquitnated by USP8; inhibits lysosomal degradation. Phosphorylation at Ser-498 is required for interaction with GGA1 and retrograded transport from endosomal compartments to the trans-Golgi network. Non-phosphorylated BACE1 enters a direct recycling route to the cell surface. In terms of tissue distribution, expressed at high levels in the brain and pancreas. In the brain, expression is highest in the substantia nigra, locus coruleus and medulla oblongata.

Its subcellular location is the cell membrane. It is found in the golgi apparatus. The protein localises to the trans-Golgi network. It localises to the endoplasmic reticulum. The protein resides in the endosome. Its subcellular location is the cell surface. It is found in the cytoplasmic vesicle membrane. The protein localises to the membrane raft. It localises to the lysosome. The protein resides in the late endosome. Its subcellular location is the early endosome. It is found in the recycling endosome. The protein localises to the cell projection. It localises to the axon. The protein resides in the dendrite. The catalysed reaction is Broad endopeptidase specificity. Cleaves Glu-Val-Asn-Leu-|-Asp-Ala-Glu-Phe in the Swedish variant of Alzheimer's amyloid precursor protein.. With respect to regulation, inhibited by RTN3 and RTN4. Its function is as follows. Responsible for the proteolytic processing of the amyloid precursor protein (APP). Cleaves at the N-terminus of the A-beta peptide sequence, between residues 671 and 672 of APP, leads to the generation and extracellular release of beta-cleaved soluble APP, and a corresponding cell-associated C-terminal fragment which is later released by gamma-secretase. Cleaves CHL1. This is Beta-secretase 1 from Homo sapiens (Human).